A 270-amino-acid chain; its full sequence is Acyl-[acyl-carrier-protein]--UDP-N-acetylglucosamine O-acyltransferase (270 aa).

This sequence belongs to the transferase hexapeptide repeat family. LpxA subfamily. In terms of assembly, homotrimer.

It localises to the cytoplasm. It catalyses the reaction a (3R)-hydroxyacyl-[ACP] + UDP-N-acetyl-alpha-D-glucosamine = a UDP-3-O-[(3R)-3-hydroxyacyl]-N-acetyl-alpha-D-glucosamine + holo-[ACP]. Its pathway is glycolipid biosynthesis; lipid IV(A) biosynthesis; lipid IV(A) from (3R)-3-hydroxytetradecanoyl-[acyl-carrier-protein] and UDP-N-acetyl-alpha-D-glucosamine: step 1/6. Involved in the biosynthesis of lipid A, a phosphorylated glycolipid that anchors the lipopolysaccharide to the outer membrane of the cell. This chain is Acyl-[acyl-carrier-protein]--UDP-N-acetylglucosamine O-acyltransferase, found in Bartonella tribocorum (strain CIP 105476 / IBS 506).